Here is a 275-residue protein sequence, read N- to C-terminus: Gibberellin-regulated protein 14 (275 aa).

Residues 1-21 (MALSLLSVFIFFHVFTNVVFA) form the signal peptide. The interval 34 to 207 (PTPTLPSPSP…TAPPVKPPTP (174 aa)) is disordered. Over residues 36-207 (PTLPSPSPAT…TAPPVKPPTP (172 aa)) the composition is skewed to pro residues.

Belongs to the GASA family. Six disulfide bonds may be present. In terms of tissue distribution, expressed in flower abscission zone, style, stamen filaments and lateral roots.

It localises to the secreted. Gibberellin-regulated protein that may function in hormonal controlled steps of development such as seed germination, flowering and seed maturation. This is Gibberellin-regulated protein 14 (GASA14) from Arabidopsis thaliana (Mouse-ear cress).